Here is a 308-residue protein sequence, read N- to C-terminus: Aspartate carbamoyltransferase catalytic subunit (308 aa).

Arg-51 and Thr-52 together coordinate carbamoyl phosphate. Lys-80 lines the L-aspartate pocket. Arg-101, His-129, and Gln-132 together coordinate carbamoyl phosphate. L-aspartate contacts are provided by Arg-162 and Arg-224. Carbamoyl phosphate contacts are provided by Leu-263 and Pro-264.

Belongs to the aspartate/ornithine carbamoyltransferase superfamily. ATCase family. In terms of assembly, heterododecamer (2C3:3R2) of six catalytic PyrB chains organized as two trimers (C3), and six regulatory PyrI chains organized as three dimers (R2).

The catalysed reaction is carbamoyl phosphate + L-aspartate = N-carbamoyl-L-aspartate + phosphate + H(+). Its pathway is pyrimidine metabolism; UMP biosynthesis via de novo pathway; (S)-dihydroorotate from bicarbonate: step 2/3. Functionally, catalyzes the condensation of carbamoyl phosphate and aspartate to form carbamoyl aspartate and inorganic phosphate, the committed step in the de novo pyrimidine nucleotide biosynthesis pathway. The chain is Aspartate carbamoyltransferase catalytic subunit from Bacteroides fragilis (strain ATCC 25285 / DSM 2151 / CCUG 4856 / JCM 11019 / LMG 10263 / NCTC 9343 / Onslow / VPI 2553 / EN-2).